A 349-amino-acid chain; its full sequence is Anthranilate phosphoribosyltransferase (349 aa).

Residues Gly82, 85–86 (GD), 92–95 (NVST), 110–118 (KHGNRGVSS), and Ser122 contribute to the 5-phospho-alpha-D-ribose 1-diphosphate site. Anthranilate is bound at residue Gly82. Ser94 provides a ligand contact to Mg(2+). Asn113 contributes to the anthranilate binding site. Residue Arg168 coordinates anthranilate. Mg(2+)-binding residues include Asp227 and Glu228.

It belongs to the anthranilate phosphoribosyltransferase family. As to quaternary structure, homodimer. The cofactor is Mg(2+).

It catalyses the reaction N-(5-phospho-beta-D-ribosyl)anthranilate + diphosphate = 5-phospho-alpha-D-ribose 1-diphosphate + anthranilate. It functions in the pathway amino-acid biosynthesis; L-tryptophan biosynthesis; L-tryptophan from chorismate: step 2/5. In terms of biological role, catalyzes the transfer of the phosphoribosyl group of 5-phosphorylribose-1-pyrophosphate (PRPP) to anthranilate to yield N-(5'-phosphoribosyl)-anthranilate (PRA). The sequence is that of Anthranilate phosphoribosyltransferase from Acinetobacter baumannii (strain SDF).